The sequence spans 289 residues: Melatonin receptor type 1B (289 aa).

At 1 to 2 (GN) the chain is on the cytoplasmic side. The chain crosses the membrane as a helical span at residues 3–23 (AFVVSLALADLVVALYPYPLV). Residues 24 to 41 (LLAIFHNGWTLGEMHCKV) lie on the Extracellular side of the membrane. A disulfide bond links Cys39 and Cys116. A helical membrane pass occupies residues 42–62 (SGFVMGLSVIGSIFNITAIAI). Topologically, residues 63-81 (NRYCYICHSFAYDKVYSCW) are cytoplasmic. A helical transmembrane segment spans residues 82–102 (NTMLYVSLIWVLTVIATVPNF). Residues 103–126 (FVGSLKYDPRIYSCTFVQTASSYY) lie on the Extracellular side of the membrane. Residues 127–147 (TIAVVVIHFIVPITVVSFCYL) traverse the membrane as a helical segment. Over 148-179 (RIWVLVLQVRRRVKSETKPRLKPSDFRNFLTM) the chain is Cytoplasmic. Residues 180-200 (FVVFVIFAFCWAPLNFIGLAV) form a helical membrane-spanning segment. Over 201–213 (AINPSEMAPKVPE) the chain is Extracellular. Residues 214–234 (WLFIISYFMAYFNSCLNAIIY) traverse the membrane as a helical segment. Topologically, residues 235–289 (GLLNQNFRNEYKRILMSLWMPRLFFQDTSKGGTDGQKSKPSPALNNNDQMKTDTL) are cytoplasmic. The disordered stretch occupies residues 264–289 (KGGTDGQKSKPSPALNNNDQMKTDTL).

The protein belongs to the G-protein coupled receptor 1 family. Brain and kidney, with trace levels in lungs.

Its subcellular location is the cell membrane. Its function is as follows. High affinity receptor for melatonin. The activity of this receptor is mediated by pertussis toxin sensitive G proteins that inhibits adenylate cyclase activity. This Gallus gallus (Chicken) protein is Melatonin receptor type 1B.